A 514-amino-acid polypeptide reads, in one-letter code: 2,3-bisphosphoglycerate-independent phosphoglycerate mutase (514 aa).

Aspartate 14 and serine 64 together coordinate Mn(2+). The active-site Phosphoserine intermediate is the serine 64. Residues histidine 125, 155–156 (RD), arginine 187, arginine 193, 263–266 (RADR), and lysine 336 contribute to the substrate site. Residues aspartate 403, histidine 407, aspartate 444, histidine 445, and histidine 463 each contribute to the Mn(2+) site.

Belongs to the BPG-independent phosphoglycerate mutase family. As to quaternary structure, monomer. It depends on Mn(2+) as a cofactor.

It catalyses the reaction (2R)-2-phosphoglycerate = (2R)-3-phosphoglycerate. It participates in carbohydrate degradation; glycolysis; pyruvate from D-glyceraldehyde 3-phosphate: step 3/5. Its function is as follows. Catalyzes the interconversion of 2-phosphoglycerate and 3-phosphoglycerate. This chain is 2,3-bisphosphoglycerate-independent phosphoglycerate mutase, found in Shewanella baltica (strain OS195).